The chain runs to 428 residues: Elongation factor 1-alpha (428 aa).

Residues 5-225 (KPILNVAFIG…DAFQPPEKPT (221 aa)) form the tr-type G domain. The tract at residues 14–21 (GHVDAGKS) is G1. Position 14–21 (14–21 (GHVDAGKS)) interacts with GTP. Ser-21 is a Mg(2+) binding site. The tract at residues 70-74 (GVTID) is G2. Residues 91-94 (DCPG) form a G3 region. GTP-binding positions include 91–95 (DCPGH) and 149–152 (NKMD). Residues 149–152 (NKMD) form a G4 region. Residues 189-191 (ASL) form a G5 region.

It belongs to the TRAFAC class translation factor GTPase superfamily. Classic translation factor GTPase family. EF-Tu/EF-1A subfamily.

It is found in the cytoplasm. It catalyses the reaction GTP + H2O = GDP + phosphate + H(+). GTP hydrolase that promotes the GTP-dependent binding of aminoacyl-tRNA to the A-site of ribosomes during protein biosynthesis. This is Elongation factor 1-alpha from Methanococcus maripaludis (strain C5 / ATCC BAA-1333).